The following is a 179-amino-acid chain: MIDNHYVQSSAKALSQIAFEEKKEKLFLNQLFIIKNIFSYNPEVVEYLASGSIKLENKKKFIEEIFDLIEPLILNFLLMAVEDNKIKYLDNIFLKAILTINKKLNIENGIIYTTLKLSDKKLLEIEKKLSVFLKKEVKLLNLIDKELISGYEIQVGDFKQRNNVASWIDQMALSIKKGD.

Belongs to the ATPase delta chain family. F-type ATPases have 2 components, F(1) - the catalytic core - and F(0) - the membrane proton channel. F(1) has five subunits: alpha(3), beta(3), gamma(1), delta(1), epsilon(1). F(0) has three main subunits: a(1), b(2) and c(10-14). The alpha and beta chains form an alternating ring which encloses part of the gamma chain. F(1) is attached to F(0) by a central stalk formed by the gamma and epsilon chains, while a peripheral stalk is formed by the delta and b chains.

Its subcellular location is the cell membrane. Its function is as follows. F(1)F(0) ATP synthase produces ATP from ADP in the presence of a proton or sodium gradient. F-type ATPases consist of two structural domains, F(1) containing the extramembraneous catalytic core and F(0) containing the membrane proton channel, linked together by a central stalk and a peripheral stalk. During catalysis, ATP synthesis in the catalytic domain of F(1) is coupled via a rotary mechanism of the central stalk subunits to proton translocation. In terms of biological role, this protein is part of the stalk that links CF(0) to CF(1). It either transmits conformational changes from CF(0) to CF(1) or is implicated in proton conduction. The polypeptide is ATP synthase subunit delta (Mycoplasmopsis pulmonis (strain UAB CTIP) (Mycoplasma pulmonis)).